The chain runs to 171 residues: Large ribosomal subunit protein uL10 (171 aa).

It belongs to the universal ribosomal protein uL10 family. As to quaternary structure, part of the ribosomal stalk of the 50S ribosomal subunit. The N-terminus interacts with L11 and the large rRNA to form the base of the stalk. The C-terminus forms an elongated spine to which L12 dimers bind in a sequential fashion forming a multimeric L10(L12)X complex.

In terms of biological role, forms part of the ribosomal stalk, playing a central role in the interaction of the ribosome with GTP-bound translation factors. This Corynebacterium glutamicum (strain R) protein is Large ribosomal subunit protein uL10.